The primary structure comprises 413 residues: Arginine biosynthesis bifunctional protein ArgJ (413 aa).

Positions 154, 180, 191, 277, 408, and 413 each coordinate substrate. T191 (nucleophile) is an active-site residue.

The protein belongs to the ArgJ family. Heterotetramer of two alpha and two beta chains.

Its subcellular location is the cytoplasm. It carries out the reaction N(2)-acetyl-L-ornithine + L-glutamate = N-acetyl-L-glutamate + L-ornithine. It catalyses the reaction L-glutamate + acetyl-CoA = N-acetyl-L-glutamate + CoA + H(+). The protein operates within amino-acid biosynthesis; L-arginine biosynthesis; L-ornithine and N-acetyl-L-glutamate from L-glutamate and N(2)-acetyl-L-ornithine (cyclic): step 1/1. It participates in amino-acid biosynthesis; L-arginine biosynthesis; N(2)-acetyl-L-ornithine from L-glutamate: step 1/4. Catalyzes two activities which are involved in the cyclic version of arginine biosynthesis: the synthesis of N-acetylglutamate from glutamate and acetyl-CoA as the acetyl donor, and of ornithine by transacetylation between N(2)-acetylornithine and glutamate. This Synechocystis sp. (strain ATCC 27184 / PCC 6803 / Kazusa) protein is Arginine biosynthesis bifunctional protein ArgJ.